The primary structure comprises 473 residues: Histone-lysine N-methyltransferase ATXR2 (473 aa).

One can recognise an SET domain in the interval 33–441; the sequence is KLITSRRCNG…KNEEVTISYI (409 aa). The MYND-type; degenerate zinc finger occupies 134-203; it reads EEQCGGSSSS…DWESSHSLLC (70 aa). Zn(2+) contacts are provided by cysteine 176, cysteine 180, histidine 199, and cysteine 203. Tyrosine 440 contacts S-adenosyl-L-methionine.

This sequence belongs to the class V-like SAM-binding methyltransferase superfamily. Histone-lysine methyltransferase family. TRX/MLL subfamily. In terms of assembly, interacts with JMJ30. Binds to ARF7 and ARF19 in the nucleus.

The protein resides in the nucleus. It catalyses the reaction L-lysyl-[histone] + S-adenosyl-L-methionine = N(6)-methyl-L-lysyl-[histone] + S-adenosyl-L-homocysteine + H(+). Its function is as follows. Histone methyltransferase that methylates 'Lys-36' (H3K36me) of histone H3 to produce H3K36me3. Promotes early stages of cellular dedifferentiation through H3K36me3-dependent, and to a lesser degree H3K4me3-dependent, activation of Lateral organ Boundaries-Domain (LBD) (e.g. LBD16 and LBD29) genes. Positive regulator of root organogenesis including lateral root formation as well as adventitious root formation from wounded leaf tissues. Recruited by JMJ30/ARF (e.g. ARF7 and ARF19) complexes to promote the deposition of H3K36me3 and, to a lower extent, H3K4me3 at LBD genes promoters, thus ensuring their stable activation during callus formation on callus-inducing medium (CIM). This chain is Histone-lysine N-methyltransferase ATXR2, found in Arabidopsis thaliana (Mouse-ear cress).